A 418-amino-acid chain; its full sequence is Serine hydroxymethyltransferase (418 aa).

(6S)-5,6,7,8-tetrahydrofolate contacts are provided by residues Leu121 and 125-127 (GHL). The residue at position 230 (Lys230) is an N6-(pyridoxal phosphate)lysine. (6S)-5,6,7,8-tetrahydrofolate contacts are provided by residues Glu246 and 355 to 357 (SPF).

The protein belongs to the SHMT family. In terms of assembly, homodimer. Pyridoxal 5'-phosphate is required as a cofactor.

It localises to the cytoplasm. It catalyses the reaction (6R)-5,10-methylene-5,6,7,8-tetrahydrofolate + glycine + H2O = (6S)-5,6,7,8-tetrahydrofolate + L-serine. It participates in one-carbon metabolism; tetrahydrofolate interconversion. It functions in the pathway amino-acid biosynthesis; glycine biosynthesis; glycine from L-serine: step 1/1. Functionally, catalyzes the reversible interconversion of serine and glycine with tetrahydrofolate (THF) serving as the one-carbon carrier. This reaction serves as the major source of one-carbon groups required for the biosynthesis of purines, thymidylate, methionine, and other important biomolecules. Also exhibits THF-independent aldolase activity toward beta-hydroxyamino acids, producing glycine and aldehydes, via a retro-aldol mechanism. The chain is Serine hydroxymethyltransferase from Streptococcus pneumoniae (strain Taiwan19F-14).